The chain runs to 255 residues: Pyrroloquinoline-quinone synthase (255 aa).

Belongs to the PqqC family.

It carries out the reaction 6-(2-amino-2-carboxyethyl)-7,8-dioxo-1,2,3,4,7,8-hexahydroquinoline-2,4-dicarboxylate + 3 O2 = pyrroloquinoline quinone + 2 H2O2 + 2 H2O + H(+). The protein operates within cofactor biosynthesis; pyrroloquinoline quinone biosynthesis. Ring cyclization and eight-electron oxidation of 3a-(2-amino-2-carboxyethyl)-4,5-dioxo-4,5,6,7,8,9-hexahydroquinoline-7,9-dicarboxylic-acid to PQQ. In Cereibacter sphaeroides (strain ATCC 17025 / ATH 2.4.3) (Rhodobacter sphaeroides), this protein is Pyrroloquinoline-quinone synthase.